A 59-amino-acid polypeptide reads, in one-letter code: Large ribosomal subunit protein uL30 (59 aa).

It belongs to the universal ribosomal protein uL30 family. Part of the 50S ribosomal subunit.

This is Large ribosomal subunit protein uL30 from Pectobacterium atrosepticum (strain SCRI 1043 / ATCC BAA-672) (Erwinia carotovora subsp. atroseptica).